Consider the following 191-residue polypeptide: UPF0302 protein USA300HOU_1400 (191 aa).

Belongs to the UPF0302 family.

The sequence is that of UPF0302 protein USA300HOU_1400 from Staphylococcus aureus (strain USA300 / TCH1516).